The primary structure comprises 156 residues: MPRKREVPVRPVLPDARYNSKLVSMFIHKLMRDGKKSTAESILYKAFDIINEKTGKAPLEVFEEALANVKPKLEVKSRRVGGSTYQVPTEIREARRLALAIRWMIGYARSRAEKGMDVKLAGELMDAAGQRGASVKKREDTHKMAEANKAFAHYRW.

Belongs to the universal ribosomal protein uS7 family. Part of the 30S ribosomal subunit. Contacts proteins S9 and S11.

One of the primary rRNA binding proteins, it binds directly to 16S rRNA where it nucleates assembly of the head domain of the 30S subunit. Is located at the subunit interface close to the decoding center, probably blocks exit of the E-site tRNA. This is Small ribosomal subunit protein uS7 from Desulfosudis oleivorans (strain DSM 6200 / JCM 39069 / Hxd3) (Desulfococcus oleovorans).